Reading from the N-terminus, the 528-residue chain is Glutamyl-tRNA(Gln) amidotransferase subunit A, mitochondrial (528 aa).

The active-site Charge relay system is Lys-76. The disordered stretch occupies residues Gln-147–Leu-166. The active-site Charge relay system is Ser-171. Ser-195 functions as the Acyl-ester intermediate in the catalytic mechanism.

This sequence belongs to the amidase family. GatA subfamily. Subunit of the heterotrimeric GatCAB amidotransferase (AdT) complex, composed of A (QRSL1), B (GATB) and C (GATC) subunits.

Its subcellular location is the mitochondrion. It carries out the reaction L-glutamyl-tRNA(Gln) + L-glutamine + ATP + H2O = L-glutaminyl-tRNA(Gln) + L-glutamate + ADP + phosphate + H(+). Allows the formation of correctly charged Gln-tRNA(Gln) through the transamidation of misacylated Glu-tRNA(Gln) in the mitochondria. The reaction takes place in the presence of glutamine and ATP through an activated gamma-phospho-Glu-tRNA(Gln). The polypeptide is Glutamyl-tRNA(Gln) amidotransferase subunit A, mitochondrial (Macaca fascicularis (Crab-eating macaque)).